Reading from the N-terminus, the 222-residue chain is 7-cyano-7-deazaguanine synthase (222 aa).

8-18 is an ATP binding site; sequence LSGGLDSTTCL. Positions 186, 194, 197, and 200 each coordinate Zn(2+).

It belongs to the QueC family. In terms of assembly, homodimer. Zn(2+) is required as a cofactor.

It catalyses the reaction 7-carboxy-7-deazaguanine + NH4(+) + ATP = 7-cyano-7-deazaguanine + ADP + phosphate + H2O + H(+). It participates in purine metabolism; 7-cyano-7-deazaguanine biosynthesis. Functionally, catalyzes the ATP-dependent conversion of 7-carboxy-7-deazaguanine (CDG) to 7-cyano-7-deazaguanine (preQ(0)). This chain is 7-cyano-7-deazaguanine synthase, found in Acetivibrio thermocellus (strain ATCC 27405 / DSM 1237 / JCM 9322 / NBRC 103400 / NCIMB 10682 / NRRL B-4536 / VPI 7372) (Clostridium thermocellum).